The sequence spans 295 residues: Fructose-bisphosphate aldolase class 1 (295 aa).

Glu176 functions as the Proton acceptor in the catalytic mechanism. Lys213 functions as the Schiff-base intermediate with dihydroxyacetone-P in the catalytic mechanism.

This sequence belongs to the class I fructose-bisphosphate aldolase family.

It catalyses the reaction beta-D-fructose 1,6-bisphosphate = D-glyceraldehyde 3-phosphate + dihydroxyacetone phosphate. Its pathway is carbohydrate degradation; glycolysis; D-glyceraldehyde 3-phosphate and glycerone phosphate from D-glucose: step 4/4. The sequence is that of Fructose-bisphosphate aldolase class 1 from Clostridium acetobutylicum (strain ATCC 824 / DSM 792 / JCM 1419 / IAM 19013 / LMG 5710 / NBRC 13948 / NRRL B-527 / VKM B-1787 / 2291 / W).